The primary structure comprises 139 residues: TDP-4-oxo-6-deoxy-alpha-D-glucose-3,4-oxoisomerase (139 aa).

His-49 functions as the Proton acceptor in the catalytic mechanism.

In terms of assembly, homodimer.

The enzyme catalyses dTDP-4-dehydro-6-deoxy-alpha-D-glucose = dTDP-3-dehydro-6-deoxy-alpha-D-galactose. Mediates the isomerization of dTDP-6-deoxy-D-xylohex-4-ulose into dTDP-6-deoxy-D-xylohex-3-ulose in the biosynthesis of dTDP-3-acetamido-3,6-dideoxy-alpha-D-galactose, a glycan chain of the S-layer. The protein is TDP-4-oxo-6-deoxy-alpha-D-glucose-3,4-oxoisomerase (fdtA) of Aneurinibacillus thermoaerophilus.